The chain runs to 119 residues: Large ribosomal subunit protein uL24 (119 aa).

This sequence belongs to the universal ribosomal protein uL24 family. As to quaternary structure, part of the 50S ribosomal subunit.

Functionally, one of two assembly initiator proteins, it binds directly to the 5'-end of the 23S rRNA, where it nucleates assembly of the 50S subunit. One of the proteins that surrounds the polypeptide exit tunnel on the outside of the subunit. The polypeptide is Large ribosomal subunit protein uL24 (Arthrobacter sp. (strain FB24)).